Reading from the N-terminus, the 355-residue chain is Elongation factor Ts (355 aa).

The segment at 82-85 is involved in Mg(2+) ion dislocation from EF-Tu; sequence TDFV.

It belongs to the EF-Ts family.

Its subcellular location is the cytoplasm. Functionally, associates with the EF-Tu.GDP complex and induces the exchange of GDP to GTP. It remains bound to the aminoacyl-tRNA.EF-Tu.GTP complex up to the GTP hydrolysis stage on the ribosome. This Helicobacter acinonychis (strain Sheeba) protein is Elongation factor Ts.